Consider the following 445-residue polypeptide: Putative H/ACA ribonucleoprotein complex subunit 4 (445 aa).

Residues 1-32 form a disordered region; that stretch reads MGKKDKRSKLEGDELAEAQQKGSFQLPSSNET. Positions 20-32 are enriched in polar residues; it reads QKGSFQLPSSNET. Asp113 serves as the catalytic Nucleophile. Residues 284 to 359 enclose the PUA domain; the sequence is HKRVVVKDSC…IVAKSKRVIM (76 aa). The disordered stretch occupies residues 407–445; sequence TDKVKKEQEDKEDEEEEEAPKKKSKKAAKKEVSSSSDSE.

This sequence belongs to the pseudouridine synthase TruB family. As to quaternary structure, component of the small nucleolar ribonucleoprotein particle containing H/ACA-type snoRNAs (H/ACA snoRNPs).

The protein localises to the nucleus. The protein resides in the nucleolus. It carries out the reaction a uridine in RNA = a pseudouridine in RNA. Plays a central role in ribosomal RNA processing. Probable catalytic subunit of H/ACA small nucleolar ribonucleoprotein (H/ACA snoRNP) complex, which catalyzes pseudouridylation of rRNA. This involves the isomerization of uridine such that the ribose is subsequently attached to C5, instead of the normal N1. Pseudouridine ('psi') residues may serve to stabilize the conformation of rRNAs. The chain is Putative H/ACA ribonucleoprotein complex subunit 4 from Caenorhabditis briggsae.